The sequence spans 138 residues: Large ribosomal subunit protein uL16 (138 aa).

The protein belongs to the universal ribosomal protein uL16 family. In terms of assembly, part of the 50S ribosomal subunit.

Its function is as follows. Binds 23S rRNA and is also seen to make contacts with the A and possibly P site tRNAs. The chain is Large ribosomal subunit protein uL16 from Acidiphilium cryptum (strain JF-5).